A 216-amino-acid chain; its full sequence is 2,5-diamino-6-ribosylamino-4(3H)-pyrimidinone 5'-phosphate reductase (216 aa).

Residues Thr51, Asp55, 79–82 (SMAR), Val126, and 148–151 (GSTL) contribute to the NADP(+) site.

Belongs to the HTP reductase family. As to quaternary structure, homodimer.

It catalyses the reaction 2,5-diamino-6-(1-D-ribitylamino)pyrimidin-4(3H)-one 5'-phosphate + NADP(+) = 2,5-diamino-6-(1-D-ribosylamino)pyrimidin-4(3H)-one 5'-phosphate + NADPH + H(+). The enzyme catalyses 2,5-diamino-6-(1-D-ribitylamino)pyrimidin-4(3H)-one 5'-phosphate + NAD(+) = 2,5-diamino-6-(1-D-ribosylamino)pyrimidin-4(3H)-one 5'-phosphate + NADH + H(+). The protein operates within cofactor biosynthesis; riboflavin biosynthesis. Its function is as follows. Catalyzes an early step in riboflavin biosynthesis, the NADPH-dependent reduction of the ribose side chain of 2,5-diamino-6-ribosylamino-4(3H)-pyrimidinone 5'-phosphate, yielding 2,5-diamino-6-ribitylamino-4(3H)-pyrimidinone 5'-phosphate. The chain is 2,5-diamino-6-ribosylamino-4(3H)-pyrimidinone 5'-phosphate reductase from Methanothermobacter thermautotrophicus (strain ATCC 29096 / DSM 1053 / JCM 10044 / NBRC 100330 / Delta H) (Methanobacterium thermoautotrophicum).